A 1177-amino-acid chain; its full sequence is MFELNNFDAIQIGLASPEQIREWSRGEVKKPETINYRTLKPEKDGLFCERIFGPMKDWECHCGKYKRVRYKGIVCDRCGVEVTKAKVRRERMGHIELAAPVSHIWYFKGIPSRMGLLMDMSPRALEKVLYFASYIVIDPKETPLLKKQLLNEKEYREAVDKYGDDSFVAGMGAEAIQELLGEIDLVAGAKELKEDLKQSTGQKRVRIIRRLEVVESFAKSGNDPKWMIINVIPVIPPDLRPMVQLDGGRFATSDLNDLYRRVINRNNRLKKLLDLGAPDIIVRNEKRMLQEAVDALIDNGRRGRPVTGPGNRPLKSLSDMLKGKQGRFRQNLLGKRVDYSGRSVIVVGPELKMYQCGLPKEMALELFKPFVMKKLVQDGVAHNIKSAKRMVERVLPQVWDVLEEVITDHPVLLNRAPTLHRLGIQAFQPVLVEGRAIKLHPLACTAYNADFDGDQMAVHVPLSVEAQAEARFLMLAAGNILKPSDGKPVCVPTQDMVLGSYYLTMDRTGAKGEGMTFSNKDEAVMAYESKYIDIHAQINVRVYKEIDGVLKSGIIKTTVGKLIFNESIPQDLGFVNREDEKEKFNLEIDFLVTKKSLGKVIDQSYMLHGPTKTSIMLDNIKALGYHYSSIGAVTVAASDMIVPPVKYDLLHEADETIDKIEKMYKRGFISEDERYERVIEKWTKTTEEVADALMDSLDKFNPIYMMADSGARGSKSQIKQLAGMRGLMASPSGKILELPIRASFREGLDVLEYFISTHGARKGNADTALKTADSGYLTRRLVDVCQDVIVREEDCGTDDGIYVSEIKEGSEVIEELKERLIGRYTAEDIVNPNSGDIIVAKNEYMDPVIADKVVSAGIKKVKIRSAFTCDCKVGVCAKCYGMNMATAKKIDIGEAVGIIAAQSIGEPGTQLTMRTFHTGGVAGSDITQGLPRVEELFEARKPKGLAIVSEIHGNVRIEETKKKRAVFVMGADGEECSYDIPFGSRLKVSDGDYIEAGDEITEGSVNPHDIMNIKGVDGARRYLLSEVQKVYRLQGVDINDKHLEVVVKQMTRKVKVLESGDTELLPGTMIDIFDFQGANAKVREFGGEEAKGEQSLLGITKAALATDSFLSAASFQETTRVLTEAAIKGKVDPLIGLKENVIIGKLIPAGTGMMRYRGLNLNTKNEKIEDNETEIVE.

The Zn(2+) site is built by Cys60, Cys62, Cys75, and Cys78. Asp450, Asp452, and Asp454 together coordinate Mg(2+). Zn(2+)-binding residues include Cys795, Cys869, Cys876, and Cys879.

Belongs to the RNA polymerase beta' chain family. The RNAP catalytic core consists of 2 alpha, 1 beta, 1 beta' and 1 omega subunit. When a sigma factor is associated with the core the holoenzyme is formed, which can initiate transcription. Mg(2+) is required as a cofactor. The cofactor is Zn(2+).

It carries out the reaction RNA(n) + a ribonucleoside 5'-triphosphate = RNA(n+1) + diphosphate. In terms of biological role, DNA-dependent RNA polymerase catalyzes the transcription of DNA into RNA using the four ribonucleoside triphosphates as substrates. The sequence is that of DNA-directed RNA polymerase subunit beta' from Clostridium botulinum (strain Alaska E43 / Type E3).